The chain runs to 94 residues: uncharacterized protein (94 aa).

Positions Met-1 to Ala-22 are cleaved as a signal peptide.

This is an uncharacterized protein from Escherichia coli (strain K12).